The primary structure comprises 693 residues: Iron-sulfur clusters transporter atm1, mitochondrial (693 aa).

The transit peptide at 1 to 28 directs the protein to the mitochondrion; the sequence is MLERCPWKLISSPRNIPARSFLNSRGTY. Residues 29–118 are Mitochondrial matrix-facing; that stretch reads LVLRKSNILP…PKGKTNLKVR (90 aa). A helical transmembrane segment spans residues 119–140; the sequence is VVSALALLVAAKILNVQVPFYF. The ABC transmembrane type-1 domain occupies 119 to 409; it reads VVSALALLVA…LGSVYREMRQ (291 aa). The Mitochondrial intermembrane portion of the chain corresponds to 141 to 163; that stretch reads KSIIDTMNTTLVQEVGALWSTVG. The chain crosses the membrane as a helical span at residues 164–187; that stretch reads AVVLGYGFARIFSTVFQELRNSVF. The Mitochondrial matrix segment spans residues 188–236; it reads AIVSQSAIRSVSSNVYQHLLNLDMNFHLSKQTGSITRAMDRGTKGISFI. A helical membrane pass occupies residues 237 to 260; that stretch reads LSSMVLHIIPITLEIAMVSGILTY. A topological domain (mitochondrial intermembrane) is located at residue Lys-261. A helical transmembrane segment spans residues 262–282; that stretch reads YGPSFSAIAATTVALYALFTV. Residues 283–348 are Mitochondrial matrix-facing; the sequence is RTTSWRTVFR…ANVKVASSLA (66 aa). Glutathione contacts are provided by residues 288-292 and 351-354; these read RTVFR and NSGQ. A helical transmembrane segment spans residues 349-367; that stretch reads FLNSGQAIIFSTALTLMMY. Topologically, residues 368–382 are mitochondrial intermembrane; it reads MGCRGIVTSNLTVGD. The chain crosses the membrane as a helical span at residues 383 to 404; sequence LVMINQLVFQLSIPLNFLGSVY. Residue Gly-401 participates in glutathione binding. The Mitochondrial matrix portion of the chain corresponds to 405–693; sequence REMRQAFTDM…FGESNKSGDA (289 aa). Positions 443 to 679 constitute an ABC transporter domain; sequence IQFDNVHFSY…NSVYTSMWHS (237 aa). ATP-binding positions include Tyr-452 and 476-487; that span reads GASGCGKSTILR.

Belongs to the ABC transporter superfamily. ABCB family. Heavy Metal importer (TC 3.A.1.210) subfamily. In terms of assembly, homodimer.

The protein localises to the mitochondrion inner membrane. In terms of biological role, performs an essential function in the generation of cytoplasmic iron-sulfur proteins by mediating the ATP-dependent export of Fe/S cluster precursors synthesized by nfs1 and other mitochondrial proteins. Hydrolyzes ATP. Binds glutathione and may function by transporting a glutathione-conjugated iron-sulfur compound. This Schizosaccharomyces pombe (strain 972 / ATCC 24843) (Fission yeast) protein is Iron-sulfur clusters transporter atm1, mitochondrial.